The following is a 534-amino-acid chain: Membrane-bound lytic murein transglycosylase F (534 aa).

The first 24 residues, 1 to 24, serve as a signal peptide directing secretion; sequence MQISQFNRLKRSALLFASVLLLSA. A non-LT domain region spans residues 25–285; it reads CQIESEPKSE…TLEEKYIGHI (261 aa). Residues 287–534 form an LT domain region; it reads AFDYVDTRAF…AEQTPVPKAE (248 aa). The active site involves Glu-330. The disordered stretch occupies residues 507–534; it reads VSGAVEVTPPPEENAPQEAEQTPVPKAE. Residues 520-534 are compositionally biased toward low complexity; sequence NAPQEAEQTPVPKAE.

It in the N-terminal section; belongs to the bacterial solute-binding protein 3 family. This sequence in the C-terminal section; belongs to the transglycosylase Slt family.

The protein localises to the cell outer membrane. It catalyses the reaction Exolytic cleavage of the (1-&gt;4)-beta-glycosidic linkage between N-acetylmuramic acid (MurNAc) and N-acetylglucosamine (GlcNAc) residues in peptidoglycan, from either the reducing or the non-reducing ends of the peptidoglycan chains, with concomitant formation of a 1,6-anhydrobond in the MurNAc residue.. Its function is as follows. Murein-degrading enzyme that degrades murein glycan strands and insoluble, high-molecular weight murein sacculi, with the concomitant formation of a 1,6-anhydromuramoyl product. Lytic transglycosylases (LTs) play an integral role in the metabolism of the peptidoglycan (PG) sacculus. Their lytic action creates space within the PG sacculus to allow for its expansion as well as for the insertion of various structures such as secretion systems and flagella. This is Membrane-bound lytic murein transglycosylase F from Vibrio campbellii (strain ATCC BAA-1116).